Here is a 211-residue protein sequence, read N- to C-terminus: Claudin-1 (211 aa).

The Cytoplasmic portion of the chain corresponds to 1–7 (MANAGLQ). A helical transmembrane segment spans residues 8 to 28 (LLGFILASLGWIGSIVSTALP). Topologically, residues 29-81 (QWKIYSYAGDNIVTAQAIYEGLWMSCVSQSTGQIQCKVFDSLLNLNSTLQATR) are extracellular. C54 and C64 are oxidised to a cystine. Residues 82 to 102 (ALMVIGILLGLIAIFVSTIGM) traverse the membrane as a helical segment. Residues 103-115 (KCMRCLEDDEVQK) are Cytoplasmic-facing. The helical transmembrane segment at 116 to 136 (MWMAVIGGIIFLISGLATLVA) threads the bilayer. Topologically, residues 137–163 (TAWYGNRIVQEFYDPLTPINARYEFGQ) are extracellular. Residues 164 to 184 (ALFTGWAAASLCLLGGVLLSC) form a helical membrane-spanning segment. Residues 185 to 211 (SCPRKTTSYPTPRPYPKPTPSSGKDYV) lie on the Cytoplasmic side of the membrane. The tract at residues 190–211 (TTSYPTPRPYPKPTPSSGKDYV) is disordered. The tract at residues 210 to 211 (YV) is interactions with TJP1, TJP2, TJP3 and PATJ.

This sequence belongs to the claudin family. In terms of assembly, can form homo- and heteropolymers with other CLDN. Homopolymers interact with CLDN3, but not CLDN2, homopolymers. Directly interacts with TJP1/ZO-1, TJP2/ZO-2 and TJP3/ZO-3. Interacts with MPDZ and PATJ. Interacts with OCLN, CD81, CLDN4, CLDN6 and CLDN9. Detected in epidermis and liver (at protein level). Widely expressed, with highest levels in liver and kidney.

It is found in the cell junction. The protein localises to the tight junction. It localises to the cell membrane. Its subcellular location is the basolateral cell membrane. Functionally, claudins function as major constituents of the tight junction complexes that regulate the permeability of epithelia. While some claudin family members play essential roles in the formation of impermeable barriers, others mediate the permeability to ions and small molecules. Often, several claudin family members are coexpressed and interact with each other, and this determines the overall permeability. CLDN1 is required to prevent the paracellular diffusion of small molecules through tight junctions in the epidermis and is required for the normal barrier function of the skin. Required for normal water homeostasis and to prevent excessive water loss through the skin, probably via an indirect effect on the expression levels of other proteins, since CLDN1 itself seems to be dispensable for water barrier formation in keratinocyte tight junctions. The protein is Claudin-1 (Cldn1) of Mus musculus (Mouse).